The sequence spans 131 residues: Glycine cleavage system H protein (131 aa).

One can recognise a Lipoyl-binding domain in the interval 24–106 (TVRIGITDYA…YGEGWLVDLE (83 aa)). Position 65 is an N6-lipoyllysine (lysine 65).

Belongs to the GcvH family. In terms of assembly, the glycine cleavage system is composed of four proteins: P, T, L and H. (R)-lipoate is required as a cofactor.

In terms of biological role, the glycine cleavage system catalyzes the degradation of glycine. The H protein shuttles the methylamine group of glycine from the P protein to the T protein. The chain is Glycine cleavage system H protein from Mycobacteroides abscessus (strain ATCC 19977 / DSM 44196 / CCUG 20993 / CIP 104536 / JCM 13569 / NCTC 13031 / TMC 1543 / L948) (Mycobacterium abscessus).